The following is a 647-amino-acid chain: DNA mismatch repair protein MutL (647 aa).

Positions 377-396 are disordered; sequence EEPQAVKQSAQLWQPPKQEW. Low complexity predominate over residues 387–396; sequence QLWQPPKQEW.

Belongs to the DNA mismatch repair MutL/HexB family.

This protein is involved in the repair of mismatches in DNA. It is required for dam-dependent methyl-directed DNA mismatch repair. May act as a 'molecular matchmaker', a protein that promotes the formation of a stable complex between two or more DNA-binding proteins in an ATP-dependent manner without itself being part of a final effector complex. The chain is DNA mismatch repair protein MutL from Bacillus cereus (strain AH187).